The chain runs to 292 residues: MPQHDQLHRYLFENFAVRGELVTVSETLQQILENHDYPQPVKNVLAELLVATSLLTATLKFDGDITVQLQGDGPMSLAVINGNNNQQMRGVARVQGEIPENADLKTLVGNGYVVITITPSEGERYQGVVGLEGDTLAACLEDYFMRSEQLPTRLFIRTGDVDGKPAAGGMLLQVMPAQNAQQDDFDHLATLTETIKTEELLTLPANEVLWRLYHEEEVTVYDPQDVEFKCTCSRERCADALKTLPDEEVDSILAEDGEIDMHCDYCGNHYLFNAMDIAEIRNNASPADPQVH.

Intrachain disulfides connect C230–C232 and C263–C266.

It belongs to the HSP33 family. In terms of processing, under oxidizing conditions two disulfide bonds are formed involving the reactive cysteines. Under reducing conditions zinc is bound to the reactive cysteines and the protein is inactive.

It localises to the cytoplasm. Its function is as follows. Redox regulated molecular chaperone. Protects both thermally unfolding and oxidatively damaged proteins from irreversible aggregation. Plays an important role in the bacterial defense system toward oxidative stress. This chain is 33 kDa chaperonin, found in Escherichia coli O7:K1 (strain IAI39 / ExPEC).